We begin with the raw amino-acid sequence, 213 residues long: Succinate dehydrogenase subunit 3-1, mitochondrial (213 aa).

The transit peptide at 1–105 directs the protein to the mitochondrion; the sequence is MAATALFRSI…LDVGTSKRLF (105 aa). Residue His130 participates in heme binding. A helical transmembrane segment spans residues 148–165; it reads ISGVYLTGVTFAGYLLYL.

As to quaternary structure, component of complex II composed of eight subunits in plants: four classical SDH subunits SDH1, SDH2, SDH3 and SDH4 (a flavoprotein (FP), an iron-sulfur protein (IP), and a cytochrome b composed of a large and a small subunit.), as well as four subunits unknown in mitochondria from bacteria and heterotrophic eukaryotes. The cofactor is heme. As to expression, expressed in flowers, inflorescences and stems.

The protein localises to the mitochondrion inner membrane. It functions in the pathway carbohydrate metabolism; tricarboxylic acid cycle. Membrane-anchoring subunit of succinate dehydrogenase (SDH). The chain is Succinate dehydrogenase subunit 3-1, mitochondrial from Arabidopsis thaliana (Mouse-ear cress).